A 98-amino-acid chain; its full sequence is NADH-ubiquinone oxidoreductase chain 4L (98 aa).

Transmembrane regions (helical) follow at residues methionine 1 to isoleucine 21, threonine 29 to leucine 49, and phenylalanine 59 to valine 79.

It belongs to the complex I subunit 4L family. In terms of assembly, core subunit of respiratory chain NADH dehydrogenase (Complex I) which is composed of 45 different subunits.

Its subcellular location is the mitochondrion inner membrane. It catalyses the reaction a ubiquinone + NADH + 5 H(+)(in) = a ubiquinol + NAD(+) + 4 H(+)(out). Functionally, core subunit of the mitochondrial membrane respiratory chain NADH dehydrogenase (Complex I) which catalyzes electron transfer from NADH through the respiratory chain, using ubiquinone as an electron acceptor. Part of the enzyme membrane arm which is embedded in the lipid bilayer and involved in proton translocation. This chain is NADH-ubiquinone oxidoreductase chain 4L (MT-ND4L), found in Zaglossus bruijni (Western long-beaked echidna).